A 292-amino-acid chain; its full sequence is ER membrane protein complex subunit 2 (292 aa).

The TPR repeat unit spans residues 163–196 (AELWWYASEIYFEMGQFEKACYCLEQVLCITPFN).

This sequence belongs to the EMC2 family. As to quaternary structure, component of the ER membrane protein complex (EMC), which is composed of EMC1, EMC2, EMC3, EMC4, EMC5 and EMC6.

The protein resides in the endoplasmic reticulum membrane. Functionally, part of the endoplasmic reticulum membrane protein complex (EMC) that enables the energy-independent insertion into endoplasmic reticulum membranes of newly synthesized membrane proteins. Preferentially accommodates proteins with transmembrane domains that are weakly hydrophobic or contain destabilizing features such as charged and aromatic residues. Involved in the cotranslational insertion of multi-pass membrane proteins in which stop-transfer membrane-anchor sequences become ER membrane spanning helices. It is also required for the post-translational insertion of tail-anchored/TA proteins in endoplasmic reticulum membranes. By mediating the proper cotranslational insertion of N-terminal transmembrane domains in an N-exo topology, with translocated N-terminus in the lumen of the ER, controls the topology of multi-pass membrane proteins. The polypeptide is ER membrane protein complex subunit 2 (EMC2) (Saccharomyces cerevisiae (strain ATCC 204508 / S288c) (Baker's yeast)).